Consider the following 476-residue polypeptide: Aspartyl/glutamyl-tRNA(Asn/Gln) amidotransferase subunit B (476 aa).

Belongs to the GatB/GatE family. GatB subfamily. As to quaternary structure, heterotrimer of A, B and C subunits.

It carries out the reaction L-glutamyl-tRNA(Gln) + L-glutamine + ATP + H2O = L-glutaminyl-tRNA(Gln) + L-glutamate + ADP + phosphate + H(+). It catalyses the reaction L-aspartyl-tRNA(Asn) + L-glutamine + ATP + H2O = L-asparaginyl-tRNA(Asn) + L-glutamate + ADP + phosphate + 2 H(+). In terms of biological role, allows the formation of correctly charged Asn-tRNA(Asn) or Gln-tRNA(Gln) through the transamidation of misacylated Asp-tRNA(Asn) or Glu-tRNA(Gln) in organisms which lack either or both of asparaginyl-tRNA or glutaminyl-tRNA synthetases. The reaction takes place in the presence of glutamine and ATP through an activated phospho-Asp-tRNA(Asn) or phospho-Glu-tRNA(Gln). In Laribacter hongkongensis (strain HLHK9), this protein is Aspartyl/glutamyl-tRNA(Asn/Gln) amidotransferase subunit B.